We begin with the raw amino-acid sequence, 374 residues long: Flap endonuclease 1 (374 aa).

Residues 1-105 are N-domain; sequence MGIKGLTALI…ELLQKRFGRR (105 aa). D34 lines the Mg(2+) pocket. R47 and R71 together coordinate DNA. D87 lines the Mg(2+) pocket. Positions 103–122 are disordered; it reads GRREEAREQEEEQKDVADAE. The interval 123–254 is I-domain; it reads KMDQLARRQV…KTALKLIREH (132 aa). Mg(2+) is bound by residues E159, E161, D180, and D182. E159 is a binding site for DNA. The DNA site is built by G232 and D234. Residue D234 coordinates Mg(2+). The disordered stretch occupies residues 335–374; that stretch reads SLSQKQQGRLDGFFTVKPGSAPPKRKAEDDKKNVKKKGKK. The tract at residues 340 to 348 is interaction with PCNA; sequence QQGRLDGFF.

It belongs to the XPG/RAD2 endonuclease family. FEN1 subfamily. In terms of assembly, interacts with PCNA. Three molecules of FEN1 bind to one PCNA trimer with each molecule binding to one PCNA monomer. PCNA stimulates the nuclease activity without altering cleavage specificity. Mg(2+) is required as a cofactor. Phosphorylated. Phosphorylation upon DNA damage induces relocalization to the nuclear plasma.

The protein localises to the nucleus. It is found in the nucleolus. It localises to the nucleoplasm. The protein resides in the mitochondrion. Its function is as follows. Structure-specific nuclease with 5'-flap endonuclease and 5'-3' exonuclease activities involved in DNA replication and repair. During DNA replication, cleaves the 5'-overhanging flap structure that is generated by displacement synthesis when DNA polymerase encounters the 5'-end of a downstream Okazaki fragment. It enters the flap from the 5'-end and then tracks to cleave the flap base, leaving a nick for ligation. Also involved in the long patch base excision repair (LP-BER) pathway, by cleaving within the apurinic/apyrimidinic (AP) site-terminated flap. Acts as a genome stabilization factor that prevents flaps from equilibrating into structures that lead to duplications and deletions. Also possesses 5'-3' exonuclease activity on nicked or gapped double-stranded DNA, and exhibits RNase H activity. Also involved in replication and repair of rDNA and in repairing mitochondrial DNA. The sequence is that of Flap endonuclease 1 from Mycosarcoma maydis (Corn smut fungus).